Consider the following 512-residue polypeptide: Kelch repeat protein C2 (512 aa).

The BTB domain occupies 2 to 67 (ESVIFSINGE…IRWKKINITI (66 aa)). Residues 102–176 (CIRMFNFSKR…LLKWIHKNPN (75 aa)) enclose the BACK domain. Kelch repeat units follow at residues 216 to 261 (IKHN…LHNC), 262 to 307 (LYII…VNDG), 309 to 354 (LYVI…FVND), 356 to 403 (IYVM…EYDG), 405 to 449 (IYVI…SCGD), and 452 to 498 (LIIA…THKS).

This sequence belongs to the poxviruses Kelch family.

The protein is Kelch repeat protein C2 of Vaccinia virus (strain Western Reserve) (VACV).